We begin with the raw amino-acid sequence, 225 residues long: Ribosomal RNA small subunit methyltransferase G (225 aa).

Residues G71, L76, 121 to 122, and R139 each bind S-adenosyl-L-methionine; that span reads AE. Residues 204–225 form a disordered region; that stretch reads VVEARRATPSNGRGRPGRSSRR.

Belongs to the methyltransferase superfamily. RNA methyltransferase RsmG family.

It is found in the cytoplasm. In terms of biological role, specifically methylates the N7 position of guanine in position 518 of 16S rRNA. This is Ribosomal RNA small subunit methyltransferase G from Mycobacterium sp. (strain KMS).